Reading from the N-terminus, the 189-residue chain is uncharacterized protein (189 aa).

Transmembrane regions (helical) follow at residues 35–55 (IIWY…AVMK), 97–117 (GVLQ…ALHF), 123–143 (WLLF…YEWT), and 144–164 (GNLF…ACQI).

The protein localises to the cell membrane. This is an uncharacterized protein from Bacillus subtilis (strain 168).